A 220-amino-acid chain; its full sequence is MAERQKAVAKQEKVTISKRDPWALKKWFAVHAPPYLGGVFLAEVPATEAEKLLMRTLEVSLYDITKDISHLPVKLKFQIHRVEGLRALTRFKGLELSRDYVKSLVRKGTSKVVAITEVKTKDGMDMRVSVMVITAHRLGTAQKSAVRKKITETLLKKASEMDTSQFLKEVLEGTLAADLFIAAKKIAPLRKVEFAKIKVLKYPPEEERVVVKEAVAEAAS.

Belongs to the eukaryotic ribosomal protein eS1 family.

This chain is Small ribosomal subunit protein eS1, found in Pyrobaculum arsenaticum (strain DSM 13514 / JCM 11321 / PZ6).